Here is a 470-residue protein sequence, read N- to C-terminus: MNAATKLPGELGPIHFVGIGGIGMSGIAEVLMTLGYRVQGSDAKASKITDRLVSLGATFFEGQRAQNLGDAGVVVISSAIKKGNPELEEARRRGLPVVRRAEMLAELMRLRSNIAIAGTHGKTTTTTMVATLLDKGGFDPTVINGGVIHAYGSNARAGAGEWMVVEADESDGSFNRLPATIAIVTNIDPEHMEHWGSFDALRKGFYDFVTNIPFYGLAVCCTDHPEVQALVGRVTDRRIVTFGFNAQADVRAINLRYENGTAHFDVALQGEGEGHLIEGMTLPMPGDHNVSNALAAVAVARHLGMKKDEIREALAAFGGVNRRFTKVGEVGGVTIIDDYGHHPVEIAAVLRAARQAVKGRVIAVHQPHRYSRLHTLFDDFCTCFNEADVVAIAEVYAAGETPIAGASRDDLVAGLIAHGHRHARAILCEDDLERLVREQARPGDMVVCLGAGTISVWANNLPARLMGRAA.

Position 118 to 124 (118 to 124 (GTHGKTT)) interacts with ATP.

The protein belongs to the MurCDEF family.

The protein localises to the cytoplasm. The catalysed reaction is UDP-N-acetyl-alpha-D-muramate + L-alanine + ATP = UDP-N-acetyl-alpha-D-muramoyl-L-alanine + ADP + phosphate + H(+). Its pathway is cell wall biogenesis; peptidoglycan biosynthesis. Functionally, cell wall formation. The chain is UDP-N-acetylmuramate--L-alanine ligase from Cereibacter sphaeroides (strain ATCC 17025 / ATH 2.4.3) (Rhodobacter sphaeroides).